An 807-amino-acid chain; its full sequence is Dual specificity protein phosphatase PPS1 (807 aa).

Residues 585-783 (LPSRILRHLY…LFKWWKKHYN (199 aa)) enclose the Tyrosine-protein phosphatase domain. A catalytic region spans residues 593–807 (LYLGSLDHAQ…GIAEVNMKYT (215 aa)). Cysteine 725 serves as the catalytic Phosphocysteine intermediate.

The protein belongs to the protein-tyrosine phosphatase family. Non-receptor class dual specificity subfamily.

The catalysed reaction is O-phospho-L-tyrosyl-[protein] + H2O = L-tyrosyl-[protein] + phosphate. It catalyses the reaction O-phospho-L-seryl-[protein] + H2O = L-seryl-[protein] + phosphate. The enzyme catalyses O-phospho-L-threonyl-[protein] + H2O = L-threonyl-[protein] + phosphate. Protein phosphatase with specificity for serine, threonine, and tyrosine residues; has a role in the DNA synthesis phase of the cell cycle. This Saccharomyces cerevisiae (strain ATCC 204508 / S288c) (Baker's yeast) protein is Dual specificity protein phosphatase PPS1 (PPS1).